Reading from the N-terminus, the 1056-residue chain is MSEPAPEVPEELFREVKYYAVGDIDPQVIQLLKAGKAKEVSYNALASHIISEDGDNPEVGEAREVFDLPVVKPSWVTLSVQCGALLPVNGFSPESCQIFFGLTACLSQVSSEDRSALWALVTFHGGSCQLNLNKKCTHLIVPEPKGEKYERAVKRTSIKIVTPDWVLDCVSEKRRKDEAFYHPRLIIYEEEEEEEEEGDNEEQDSQNEGSTEKSSVASSAVASPAEQPCSPKPRAEVSKGELMFDDSSDSSPEKQERSLNWAPAEAPPLNTAQRRLPQGKGPGLINLCANVPPVPGDILPPDMRGNLMAPGQNLQNSERSEILGTWSPAVRTLRNITNNADIQQINRPSNVAHILQSLSAPTKSLEQQVARGQQGHPNASAVLFGQAKGAPETHVLQQHHPPQQPQQQHPALHLQPQIMQLQQQQQQQQQQQQQPQPYPQPPSHQFPQQVHQHQFSQQQLQFPQQPLHPQQQLHRPQQQLQPFQQQHALQQQLHQLQQQQLQHHQLAQLQQQQQQQHNLLQQQQQQQQLQRLQQQQQMQNQAAHLSQASQALQHQVLPQQPLQLSLQPPPQQQQQQQLFGHDPAVEIPEESFLLGCVFAIADYPEQMSDKQLLATWKRIIQAHGGTVDPTFTSRCTHLLCASQVSSMYTQALRERKRCVTAHWLNTVLKKKKLMPPHRALHFPVAFPPGGKPCSQHIISVTGFVDNDRDDLKLMAYLAGAKYTGYLCRSNTVLICKEPSGLKYEKAKEWRIPCVNAQWLGDILLGNFEALRQVQYSRYTAFNMPDPFVPTPHLVLGLLDAWRTPVKVTAELLMGVRLPPKLKPNEVANIQPSSKRARIEDLPPPTKKLTPELTPLVLFTGFEPVQVQQYIKKLYILGGEVAECTKKCTHLIASKVTRTVKFLTAISVVKHIVTPDWLEECFKRQTFIDEQNYILRDAEAEVLFSFSLEESLKRAHVSPLFKTKYFYITPGICPSLATMKAIVECAGGKVLAKQPSFRKLMEHKQNKSLSEIILISCENDLHLCREYFARGIDVHNAEFVLTGVLTQTLDYESYKFN.

BRCT domains are found at residues 8-93 (VPEE…GFSP) and 94-183 (ESCQ…FYHP). Residues 94–183 (ESCQIFFGLT…RRKDEAFYHP (90 aa)) form an interaction with PAGR1 region. Positions 188–205 (YEEEEEEEEEGDNEEQDS) are enriched in acidic residues. 3 disordered regions span residues 188–276 (YEEE…QRRL), 393–412 (THVL…HPAL), and 419–486 (MQLQ…FQQQ). Low complexity predominate over residues 214–223 (SSVASSAVAS). Phosphoserine occurs at positions 223 and 230. Composition is skewed to low complexity over residues 396–412 (LQQH…HPAL), 419–435 (MQLQ…QQQP), and 445–486 (QFPQ…FQQQ). Residues 577-1056 (QLFGHDPAVE…TLDYESYKFN (480 aa)) are interaction with TP53BP1. 4 BRCT domains span residues 588 to 681 (PEES…RALH), 688 to 776 (PGGK…VQYS), 853 to 934 (TPLV…NYIL), and 955 to 989 (HVSP…GGKV). The short motif at 655–672 (RKRCVTAHWLNTVLKKKK) is the Nuclear localization signal element.

As to quaternary structure, interacts with the C-terminal transactivation domain of PAX2. Forms a constitutive complex with PAGR1 independently of the MLL2/MLL3 complex. Interacts with TP53BP1 (when phosphorylated at the N-terminus by ATM). Interacts with HLTF. Component of the KMT2 family MLL2/MLL3 complex (also named ASCOM complex), at least composed of the HMTs KMT2D and/or KMT2C, the common subunits ASH2L, RBBP5, WDR5 and DPY30, and the complex type-specific subunits PAXIP1/PTIP, PAGR1, NCOA6 and KDM6A; required for the association of PAGR1 with the MLL2/MLL3 complex. Interacts with NUPR1; this interaction prevents PAXIP1 inhibition of PAX2 transcription factor activity. As to expression, expression detected in all tissues examined, including brain stem, cerebellum, cortex, heart, spleen, kidney, liver, thymus and lung.

The protein resides in the nucleus matrix. It is found in the chromosome. Involved in DNA damage response and in transcriptional regulation through histone methyltransferase (HMT) complexes such as the MLL2/MLL3 complex. Plays a role in early development. In DNA damage response is required for cell survival after ionizing radiation. In vitro shown to be involved in the homologous recombination mechanism for the repair of double-strand breaks (DSBs). Its localization to DNA damage foci requires Rnf8 and Ube2n. Recruits Tp53bp1 to DNA damage foci and, at least in particular repair processes, effective DNA damage response appears to require the association with Tp53bp1 phosphorylated by Atm. Together with Tp53bp1 regulates Atm association. Proposed to recruit Pagr1 to sites of DNA damage and the Pagr1:Paxip1 complex is required for cell survival in response to DNA damage independently of the MLL2/MLL3 complex. However, this function has been questioned. Promotes ubiquitination of PCNA following UV irradiation and may regulate recruitment of polymerase eta and Rad51 to chromatin after DNA damage. Proposed to be involved in transcriptional regulation by linking MLL-containing histone methyltransferase (HMT) complexes to gene promoters by interacting with promoter-bound transcription factors such as Pax2. Associates with gene promoters that are known to be regulated by Kmt2d/Mll2. During immunoglobulin class switching in activated B-cells is involved in trimethylation of histone H3 at 'Lys-4' and in transcription initiation of downstream switch regions at the immunoglobulin heavy-chain (Igh) locus; this function appears to involve the recruitment of MLL-containing HMT complexes. Conflictingly, its function in transcriptional regulation during immunoglobulin class switching is reported to be independent of the MLL2/MLL3 complex. The chain is PAX-interacting protein 1 (Paxip1) from Mus musculus (Mouse).